A 299-amino-acid chain; its full sequence is Biotin transporter (299 aa).

10 consecutive transmembrane segments (helical) span residues 2–22, 26–46, 56–76, 81–101, 110–130, 137–157, 172–192, 202–222, 233–253, and 256–276; these read ALLI…GEYL, VDSY…FLPF, TISL…MLSF, YLTV…ITLI, LRWG…IIRY, FWVG…GMVG, AFAW…SLLG, LQWS…YFMW, TLGI…LAIW, and QPHW…LWVH. 2 EamA domains span residues 3–128 and 139–274; these read LLII…AGII and VGLL…ASLW.

It belongs to the drug/metabolite transporter (DMT) superfamily. 10 TMS drug/metabolite exporter (DME) (TC 2.A.7.3) family.

The protein localises to the cell inner membrane. The catalysed reaction is biotin(in) = biotin(out). In terms of biological role, uptake of biotin. This is Biotin transporter from Salmonella typhi.